A 571-amino-acid chain; its full sequence is External alternative NAD(P)H-ubiquinone oxidoreductase B1, mitochondrial (571 aa).

The N-terminal 35 residues, 1 to 35 (MTLLSSLGRASRSAPLASKLLLLGTLSGGSIVAYA), are a transit peptide targeting the mitochondrion. Residue 51 to 81 (KVVVLGTGWAGISFLKDLDITSYDVQVVSPQ) participates in FAD binding. 215–251 (LHFVIVGGGPTGVEFAAELHDFIIEDITKIYPSVKEL) provides a ligand contact to NAD(+). The 36-residue stretch at 372–407 (KILGDIANIFKAADADNSGTLTMEELEGVVDDIIVR) folds into the EF-hand domain. Ca(2+) contacts are provided by Asp-385, Asp-387, Ser-389, Thr-391, and Glu-396. The Microbody targeting signal signature appears at 562–571 (YIFGRDSSRI).

The protein belongs to the NADH dehydrogenase family. The cofactor is FAD. As to expression, expressed in seedlings, roots, cotyledons, leaves, stems, buds and flowers.

Its subcellular location is the mitochondrion inner membrane. It localises to the peroxisome. The enzyme catalyses a quinone + NADH + H(+) = a quinol + NAD(+). The catalysed reaction is a ubiquinone + NADH + H(+) = a ubiquinol + NAD(+). Activity is calcium-dependent with a more pronounced effect at higher pH. Functionally, alternative NADH-ubiquinone oxidoreductase which catalyzes the oxidation of mitochondrial NADH does not translocate protons across the inner mitochondrial membrane. Calcium-dependent NAD(P)H dehydrogenase. Binds calcium ions. This chain is External alternative NAD(P)H-ubiquinone oxidoreductase B1, mitochondrial (NDB1), found in Arabidopsis thaliana (Mouse-ear cress).